We begin with the raw amino-acid sequence, 764 residues long: Metabotropic glutamate receptor-like protein H (764 aa).

An N-terminal signal peptide occupies residues 1–20 (MKNILKILILILICINKINC). Residues 21 to 393 (LDGDGKQFRM…EVEFSQSIQN (373 aa)) are Extracellular-facing. 5 N-linked (GlcNAc...) asparagine glycosylation sites follow: Asn-72, Asn-260, Asn-278, Asn-344, and Asn-379. Residues 394 to 414 (GFSITTGILIGITILMMIGII) form a helical membrane-spanning segment. Residues 415 to 427 (KYSKTPSMRSASP) lie on the Cytoplasmic side of the membrane. Residues 428-448 (IFLNFILAGGIIVYIGIIVWV) traverse the membrane as a helical segment. Topologically, residues 449 to 464 (GPMSTHSCNARLWLVT) are extracellular. Residues 465–485 (LGFSTLIGSLVVKNFRIWLIF) form a helical membrane-spanning segment. At 486-500 (DNPELKSIKITNYQL) the chain is on the cytoplasmic side. The helical transmembrane segment at 501 to 521 (FPWVGACLVINIILMAILTSV) threads the bilayer. At 522–552 (GDLKQIDAMNIDSLGKYEYMKVCKMNSSGAS) the chain is on the extracellular side. An N-linked (GlcNAc...) asparagine glycan is attached at Asn-547. Residues 553 to 573 (TLYTILAYFAALLLVGVFVSW) form a helical membrane-spanning segment. The Cytoplasmic segment spans residues 574-587 (KIRIVDILEFNESG). A helical transmembrane segment spans residues 588-608 (AIANTLYAISFCLFVIVPLMI). At 609 to 617 (SPQDMQSET) the chain is on the extracellular side. Residues 618–638 (IILCTTGLFITTAALLIIFIP) form a helical membrane-spanning segment. Residues 639–764 (KFWRVFRKGA…IIVNDSENNN (126 aa)) are Cytoplasmic-facing. The interval 664 to 764 (ATARAESGSK…IIVNDSENNN (101 aa)) is disordered. A compositionally biased stretch (low complexity) spans 671-690 (GSKGSNGNASSGNRTNRRGN). Residues 707-719 (ENQKEKEKIKDDV) are compositionally biased toward basic and acidic residues. Acidic residues predominate over residues 731–748 (FTDEASDTDNNEFNDIEL).

It in the N-terminal section; belongs to the BMP lipoprotein family. In the C-terminal section; belongs to the G-protein coupled receptor 3 family. GABA-B receptor subfamily.

Its subcellular location is the membrane. This is Metabotropic glutamate receptor-like protein H (grlH) from Dictyostelium discoideum (Social amoeba).